The chain runs to 383 residues: Succinyl-diaminopimelate desuccinylase (383 aa).

A Zn(2+)-binding site is contributed by His74. Asp76 is a catalytic residue. Zn(2+) is bound at residue Asp107. Residue Glu141 is the Proton acceptor of the active site. Glu142, Glu170, and His356 together coordinate Zn(2+).

Belongs to the peptidase M20A family. DapE subfamily. In terms of assembly, homodimer. Zn(2+) serves as cofactor. Requires Co(2+) as cofactor.

It carries out the reaction N-succinyl-(2S,6S)-2,6-diaminopimelate + H2O = (2S,6S)-2,6-diaminopimelate + succinate. Its pathway is amino-acid biosynthesis; L-lysine biosynthesis via DAP pathway; LL-2,6-diaminopimelate from (S)-tetrahydrodipicolinate (succinylase route): step 3/3. Functionally, catalyzes the hydrolysis of N-succinyl-L,L-diaminopimelic acid (SDAP), forming succinate and LL-2,6-diaminopimelate (DAP), an intermediate involved in the bacterial biosynthesis of lysine and meso-diaminopimelic acid, an essential component of bacterial cell walls. The polypeptide is Succinyl-diaminopimelate desuccinylase (Cupriavidus taiwanensis (strain DSM 17343 / BCRC 17206 / CCUG 44338 / CIP 107171 / LMG 19424 / R1) (Ralstonia taiwanensis (strain LMG 19424))).